A 188-amino-acid chain; its full sequence is NAD(P)H-quinone oxidoreductase subunit J (188 aa).

Belongs to the complex I 30 kDa subunit family. NDH-1 can be composed of about 15 different subunits; different subcomplexes with different compositions have been identified which probably have different functions.

It is found in the cellular thylakoid membrane. It catalyses the reaction a plastoquinone + NADH + (n+1) H(+)(in) = a plastoquinol + NAD(+) + n H(+)(out). It carries out the reaction a plastoquinone + NADPH + (n+1) H(+)(in) = a plastoquinol + NADP(+) + n H(+)(out). In terms of biological role, NDH-1 shuttles electrons from an unknown electron donor, via FMN and iron-sulfur (Fe-S) centers, to quinones in the respiratory and/or the photosynthetic chain. The immediate electron acceptor for the enzyme in this species is believed to be plastoquinone. Couples the redox reaction to proton translocation, and thus conserves the redox energy in a proton gradient. Cyanobacterial NDH-1 also plays a role in inorganic carbon-concentration. In Parasynechococcus marenigrum (strain WH8102), this protein is NAD(P)H-quinone oxidoreductase subunit J.